Reading from the N-terminus, the 321-residue chain is MANIKDIAEKAGVSVTTVSRVINNHPYVSEDKRKRVFEAMESLEYTRNIHAVHLSKGFSNMIGVVLPTVNLPYFAELIAGIADAAAESGVHLSLFQTNYEVQKEIFALSQLKQRQVDGLIFCSKALADEKLMEWEGPILLCQNSDNARFPTISIPHQEAFRNGLDYLIAKGHKKIAICLARKKGMNSHFRIKAYKEALEEIGEAFREDWVIEKAITINDGKALFHKWNTWKEKPTAIFVANDQVSAGLFLEAKNQRVSVPDELAILSVDNHEISQALGITTIDIQTREMGKQAFAILEKRIQGQPIERKVLDYRLIERSTV.

In terms of domain architecture, HTH lacI-type spans 1-56 (MANIKDIAEKAGVSVTTVSRVINNHPYVSEDKRKRVFEAMESLEYTRNIHAVHLSK). Positions 4–23 (IKDIAEKAGVSVTTVSRVIN) form a DNA-binding region, H-T-H motif.

This is an uncharacterized protein from Bacillus subtilis (strain 168).